The sequence spans 89 residues: UPF0175 protein APE_0276a (89 aa).

Belongs to the UPF0175 family.

This chain is UPF0175 protein APE_0276a, found in Aeropyrum pernix (strain ATCC 700893 / DSM 11879 / JCM 9820 / NBRC 100138 / K1).